The primary structure comprises 465 residues: Cysteine--tRNA ligase (465 aa).

A Zn(2+)-binding site is contributed by C30. The short motif at 32-42 (MTVYDYCHVGH) is the 'HIGH' region element. Residues C214, H239, and E243 each contribute to the Zn(2+) site. Positions 271–275 (KMSKS) match the 'KMSKS' region motif. K274 is an ATP binding site.

The protein belongs to the class-I aminoacyl-tRNA synthetase family. As to quaternary structure, monomer. The cofactor is Zn(2+).

It is found in the cytoplasm. The catalysed reaction is tRNA(Cys) + L-cysteine + ATP = L-cysteinyl-tRNA(Cys) + AMP + diphosphate. The protein is Cysteine--tRNA ligase of Paraburkholderia xenovorans (strain LB400).